Consider the following 163-residue polypeptide: Nucleotide-binding protein ECA1137 (163 aa).

Belongs to the YajQ family.

In terms of biological role, nucleotide-binding protein. This Pectobacterium atrosepticum (strain SCRI 1043 / ATCC BAA-672) (Erwinia carotovora subsp. atroseptica) protein is Nucleotide-binding protein ECA1137.